A 1048-amino-acid polypeptide reads, in one-letter code: Dyslexia-associated protein KIAA0319-like protein (1048 aa).

Topologically, residues 1 to 29 (MEKRLGVKPSPASWVLPGYCWQTSVKLPR) are cytoplasmic. A helical membrane pass occupies residues 30–50 (SLYLLYSFFCFSVLWLSTDAD). An MANSC domain is found at 49–127 (ADESRCQQGK…PFRTDSSNSM (79 aa)). At 51–928 (ESRCQQGKTL…RDGDSNCEWS (878 aa)) the chain is on the extracellular side. 2 disordered regions span residues 198–218 (HGAMQHSKVNHSEEAGALSPT) and 231–300 (SFTS…STSA). Positions 231–241 (SFTSNHTTQTP) are enriched in polar residues. N-linked (GlcNAc...) asparagine glycosylation is present at Asn246. 2 stretches are compositionally biased toward low complexity: residues 247 to 261 (VSIHPEPSEHSSPVS) and 287 to 300 (ATPTPQASSQSTSA). PKD domains lie at 309 to 400 (VVSA…VKPE), 408 to 497 (VAVV…VNKA), 503 to 593 (VANA…VQPE), 599 to 687 (QADA…VKEE), and 693 to 784 (VAKI…VKPD). A glycan (N-linked (GlcNAc...) asparagine) is linked at Asn394. Positions 593-623 (ENNKPPQADAGPDKELTLPVDSTTLDGSKST) are disordered. Residues 929-949 (VLYVIIASFVIVVALGILSWT) form a helical membrane-spanning segment. Topologically, residues 950 to 1048 (TICCCKRQKG…KSRSAREEIL (99 aa)) are cytoplasmic. Thr973 carries the phosphothreonine modification. Phosphoserine is present on Ser977. The tract at residues 980 to 1007 (LKPTSRAGSKQKGPTLSSSLMHSESELD) is disordered. Polar residues predominate over residues 985–994 (RAGSKQKGPT). Phosphoserine occurs at positions 1008 and 1030. Residues 1024 to 1048 (LYGQNGSVPNGQTPLKSRSAREEIL) are disordered. The span at 1027–1039 (QNGSVPNGQTPLK) shows a compositional bias: polar residues. At Thr1036 the chain carries Phosphothreonine.

Interacts with RTN4R. In terms of processing, N-glycosylated.

It is found in the cytoplasmic granule membrane. The protein localises to the golgi apparatus membrane. The protein resides in the golgi apparatus. It localises to the trans-Golgi network membrane. Its subcellular location is the cell membrane. In terms of biological role, possible role in axon guidance through interaction with RTN4R. (Microbial infection) Acts as a receptor for adeno-associated virus and is involved in adeno-associated virus infection through endocytosis system. This Mus musculus (Mouse) protein is Dyslexia-associated protein KIAA0319-like protein.